Here is a 352-residue protein sequence, read N- to C-terminus: ATPase GET3 (352 aa).

ATP is bound at residue 26–33 (KGGVGKTT). D57 is an active-site residue. E243 and N270 together coordinate ATP. The Zn(2+) site is built by C283 and C286.

Belongs to the arsA ATPase family. Homodimer. Component of the Golgi to ER traffic (GET) complex, which is composed of GET1, GET2 and GET3. Within the complex, GET1 and GET2 form a heterotetramer which is stabilized by phosphatidylinositol binding and which binds to the GET3 homodimer. Interacts with the chloride channel protein GEF1.

The protein localises to the cytoplasm. Its subcellular location is the endoplasmic reticulum. It is found in the golgi apparatus. In terms of biological role, ATPase required for the post-translational delivery of tail-anchored (TA) proteins to the endoplasmic reticulum. Recognizes and selectively binds the transmembrane domain of TA proteins in the cytosol. This complex then targets to the endoplasmic reticulum by membrane-bound receptors GET1 and GET2, where the tail-anchored protein is released for insertion. This process is regulated by ATP binding and hydrolysis. ATP binding drives the homodimer towards the closed dimer state, facilitating recognition of newly synthesized TA membrane proteins. ATP hydrolysis is required for insertion. Subsequently, the homodimer reverts towards the open dimer state, lowering its affinity for the GET1-GET2 receptor, and returning it to the cytosol to initiate a new round of targeting. Cooperates with the HDEL receptor ERD2 to mediate the ATP-dependent retrieval of resident ER proteins that contain a C-terminal H-D-E-L retention signal from the Golgi to the ER. Involved in low-level resistance to the oxyanions arsenite and arsenate, and in heat tolerance. The chain is ATPase GET3 from Vanderwaltozyma polyspora (strain ATCC 22028 / DSM 70294 / BCRC 21397 / CBS 2163 / NBRC 10782 / NRRL Y-8283 / UCD 57-17) (Kluyveromyces polysporus).